Consider the following 555-residue polypeptide: CTP synthase (555 aa).

The amidoligase domain stretch occupies residues 1 to 265; sequence MTRYIFITGG…GNRVCEKLNI (265 aa). S13 serves as a coordination point for CTP. Position 13 (S13) interacts with UTP. Residues 14–19 and D71 each bind ATP; that span reads SLGKGI. 2 residues coordinate Mg(2+): D71 and E139. CTP is bound by residues 146-148, 186-191, and K222; these read DIE and KTKPTQ. Residues 186–191 and K222 contribute to the UTP site; that span reads KTKPTQ. Residues 290 to 541 form the Glutamine amidotransferase type-1 domain; that stretch reads TVAVVGKYVD…IKAGLAAKEA (252 aa). An L-glutamine-binding site is contributed by G351. The Nucleophile; for glutamine hydrolysis role is filled by C378. L-glutamine contacts are provided by residues 379 to 382, E402, and R469; that span reads LGMQ. Residues H514 and E516 contribute to the active site.

This sequence belongs to the CTP synthase family. In terms of assembly, homotetramer.

The enzyme catalyses UTP + L-glutamine + ATP + H2O = CTP + L-glutamate + ADP + phosphate + 2 H(+). The catalysed reaction is L-glutamine + H2O = L-glutamate + NH4(+). It carries out the reaction UTP + NH4(+) + ATP = CTP + ADP + phosphate + 2 H(+). Its pathway is pyrimidine metabolism; CTP biosynthesis via de novo pathway; CTP from UDP: step 2/2. Its activity is regulated as follows. Allosterically activated by GTP, when glutamine is the substrate; GTP has no effect on the reaction when ammonia is the substrate. The allosteric effector GTP functions by stabilizing the protein conformation that binds the tetrahedral intermediate(s) formed during glutamine hydrolysis. Inhibited by the product CTP, via allosteric rather than competitive inhibition. Its function is as follows. Catalyzes the ATP-dependent amination of UTP to CTP with either L-glutamine or ammonia as the source of nitrogen. Regulates intracellular CTP levels through interactions with the four ribonucleotide triphosphates. In Coxiella burnetii (strain RSA 331 / Henzerling II), this protein is CTP synthase.